The following is a 747-amino-acid chain: Tegument protein UL46 homolog (747 aa).

Disordered stretches follow at residues 437 to 484, 525 to 593, 611 to 665, and 689 to 747; these read FCCP…SPRT, QRSD…DYMR, TPYM…PEVV, and SASR…VSSL. Residues 465 to 484 show a composition bias toward polar residues; sequence LRSSRQLPTSPPSNIVSPRT. The segment covering 528-540 has biased composition (low complexity); it reads DSSSSDNSTCSST. Residues 541–553 show a composition bias toward polar residues; the sequence is ETQYITLPSTPSP. 2 stretches are compositionally biased toward basic and acidic residues: residues 707-724 and 736-747; these read VCRE…DGFI and KHPDQTERVSSL.

The protein belongs to the herpesviridae HHV-1 VP11/12 protein family.

It is found in the virion tegument. Its subcellular location is the host cell membrane. Functionally, modulates alpha trans-inducing factor-dependent activation of alpha genes. The protein is Tegument protein UL46 homolog of Equine herpesvirus 1 (strain Ab4p) (EHV-1).